Reading from the N-terminus, the 157-residue chain is RxLR effector protein PITG_04049 (157 aa).

The signal sequence occupies residues 1–23 (MRLIAGVLAGFLVICEVTSTSES). Positions 51 to 65 (QFLRTDVVMNRGEER) match the RxLR-dEER motif.

This sequence belongs to the RxLR effector family.

The protein localises to the secreted. The protein resides in the host cytoplasm. It localises to the host nucleus. Effector that might be involved in host plant infection. In Phytophthora infestans (strain T30-4) (Potato late blight agent), this protein is RxLR effector protein PITG_04049.